We begin with the raw amino-acid sequence, 813 residues long: Probable E3 ubiquitin-protein ligase hulA (813 aa).

The 109-residue stretch at 1–109 (MGSNLPAQPN…QMGGDEMLTR (109 aa)) folds into the C2 domain. Disordered stretches follow at residues 131–235 (NLST…GWER) and 251–351 (RTTT…YFVD). Over residues 148-167 (VQSSTSSGLVPQVAPSSSHP) the composition is skewed to polar residues. The span at 188–215 (RVPSTTRPSSTAAPASAAGAAVSNSHGS) shows a compositional bias: low complexity. The WW 1 domain maps to 227–260 (GRLPAGWERREDNLGRTYYVDHNTRTTTWTRPSS). The segment covering 251–264 (RTTTWTRPSSNYNE) has biased composition (polar residues). Over residues 265–292 (HAQRSQREANMQLERRAHQSRMLPEDRT) the composition is skewed to basic and acidic residues. Over residues 293-307 (GANSPNLPESSQQAH) the composition is skewed to polar residues. Low complexity predominate over residues 322 to 331 (ATGATTAGTG). WW domains are found at residues 331–364 (GELP…DPRR) and 391–424 (GPLP…DPRL). The HECT domain maps to 480–813 (SASDLKKRLM…VEETLGFGQE (334 aa)). Residue Cys-781 is the Glycyl thioester intermediate of the active site.

Belongs to the RSP5/NEDD4 family. As to quaternary structure, interacts with creD.

The protein localises to the cytoplasm. The catalysed reaction is S-ubiquitinyl-[E2 ubiquitin-conjugating enzyme]-L-cysteine + [acceptor protein]-L-lysine = [E2 ubiquitin-conjugating enzyme]-L-cysteine + N(6)-ubiquitinyl-[acceptor protein]-L-lysine.. Its pathway is protein modification; protein ubiquitination. E3 ubiquitin-protein ligase which accepts ubiquitin from an E2 ubiquitin-conjugating enzyme in the form of a thioester and then directly transfers the ubiquitin to targeted substrates. Probably involved in the regulatory network controlling carbon source utilization. The chain is Probable E3 ubiquitin-protein ligase hulA (hulA) from Aspergillus fumigatus (strain CBS 144.89 / FGSC A1163 / CEA10) (Neosartorya fumigata).